The following is a 407-amino-acid chain: Peptidase T (407 aa).

Zn(2+) is bound at residue H78. D80 is a catalytic residue. A Zn(2+)-binding site is contributed by D141. The active-site Proton acceptor is the E175. E176, D198, and H380 together coordinate Zn(2+).

The protein belongs to the peptidase M20B family. It depends on Zn(2+) as a cofactor.

The protein localises to the cytoplasm. It carries out the reaction Release of the N-terminal residue from a tripeptide.. Cleaves the N-terminal amino acid of tripeptides. This Clostridium novyi (strain NT) protein is Peptidase T.